We begin with the raw amino-acid sequence, 420 residues long: Dihydrolipoyllysine-residue succinyltransferase component of 2-oxoglutarate dehydrogenase complex (420 aa).

Residues 1–76 (MAEVKVPELA…EVGQAVAVVG (76 aa)) form the Lipoyl-binding domain. An N6-lipoyllysine modification is found at Lys42. Residues 75–201 (VGEGQVNTSN…EKMSRRKKTA (127 aa)) are disordered. Residues 81–90 (NTSNDSSNES) show a composition bias toward polar residues. A compositionally biased stretch (basic and acidic residues) spans 91–102 (SQKDEAKEKETP). A compositionally biased stretch (polar residues) spans 103 to 127 (KQSNPNSSESENTQDNSQQRINATP). A Peripheral subunit-binding (PSBD) domain is found at 124 to 160 (NATPSARRHARKNGVDLSEVSGKGNDVLRKDDVENSQ). The segment covering 149–158 (DVLRKDDVEN) has biased composition (basic and acidic residues). The span at 159–188 (SQKSSSQTAKSESKSQNSGSKQSNNNPSKP) shows a compositional bias: low complexity. Active-site residues include His391 and Asp395.

Belongs to the 2-oxoacid dehydrogenase family. Forms a 24-polypeptide structural core with octahedral symmetry. Part of the 2-oxoglutarate dehydrogenase (OGDH) complex composed of E1 (2-oxoglutarate dehydrogenase), E2 (dihydrolipoamide succinyltransferase) and E3 (dihydrolipoamide dehydrogenase); the complex contains multiple copies of the three enzymatic components (E1, E2 and E3). (R)-lipoate is required as a cofactor.

It carries out the reaction N(6)-[(R)-dihydrolipoyl]-L-lysyl-[protein] + succinyl-CoA = N(6)-[(R)-S(8)-succinyldihydrolipoyl]-L-lysyl-[protein] + CoA. Its pathway is amino-acid degradation; L-lysine degradation via saccharopine pathway; glutaryl-CoA from L-lysine: step 6/6. Its function is as follows. E2 component of the 2-oxoglutarate dehydrogenase (OGDH) complex which catalyzes the second step in the conversion of 2-oxoglutarate to succinyl-CoA and CO(2). The polypeptide is Dihydrolipoyllysine-residue succinyltransferase component of 2-oxoglutarate dehydrogenase complex (odhB) (Staphylococcus epidermidis (strain ATCC 12228 / FDA PCI 1200)).